We begin with the raw amino-acid sequence, 176 residues long: NAD(P)H-quinone oxidoreductase subunit 6, chloroplastic (176 aa).

5 helical membrane-spanning segments follow: residues 10-30, 32-52, 61-81, 92-112, and 152-172; these read FLLVFLGSGLLVGGLGVVLLP, PIFSAFSLGFVLVCISLLYIL, AQLLIYVGAINVLIIFAVMFM, LWTVGNGITSLVCTTILFSLM, and FFLPFELISIILLVALIGAIS.

The protein belongs to the complex I subunit 6 family. In terms of assembly, NDH is composed of at least 16 different subunits, 5 of which are encoded in the nucleus.

The protein resides in the plastid. The protein localises to the chloroplast thylakoid membrane. The catalysed reaction is a plastoquinone + NADH + (n+1) H(+)(in) = a plastoquinol + NAD(+) + n H(+)(out). It catalyses the reaction a plastoquinone + NADPH + (n+1) H(+)(in) = a plastoquinol + NADP(+) + n H(+)(out). NDH shuttles electrons from NAD(P)H:plastoquinone, via FMN and iron-sulfur (Fe-S) centers, to quinones in the photosynthetic chain and possibly in a chloroplast respiratory chain. The immediate electron acceptor for the enzyme in this species is believed to be plastoquinone. Couples the redox reaction to proton translocation, and thus conserves the redox energy in a proton gradient. The chain is NAD(P)H-quinone oxidoreductase subunit 6, chloroplastic (ndhG) from Nasturtium officinale (Watercress).